The following is a 145-amino-acid chain: Bacilliredoxin ABC2045 (145 aa).

Belongs to the bacilliredoxin family.

This chain is Bacilliredoxin ABC2045, found in Shouchella clausii (strain KSM-K16) (Alkalihalobacillus clausii).